The primary structure comprises 496 residues: Fibronectin type III and SPRY domain-containing protein 1 (496 aa).

Positions 4–99 form a coiled coil; that stretch reads QKEALRKIIT…ALESSEELLE (96 aa). The COS domain occupies 105-162; sequence LLATDSKDFPQAAKQIKDGVTMAPAFRLSLKAKVSDNMSHLMVDFAQERRMLQALTFL. Residues 164-268 enclose the Fibronectin type-III domain; it reads VPSAPVIDLT…EPVTLETPAF (105 aa). In terms of domain architecture, B30.2/SPRY spans 268–477; sequence FMFRLDASTS…VTTGLQVPSS (210 aa). The disordered stretch occupies residues 301–336; it reads KAREKDGKGRTASPVNSPARGTPSPKRMPSGRGGRD. Omega-N-methylarginine occurs at positions 310 and 320.

Oligomerization is required for binding to microtubules.

Its subcellular location is the cytoplasm. It localises to the cytoskeleton. The protein localises to the microtubule organizing center. The protein resides in the centrosome. It is found in the nucleus. Its subcellular location is the cleavage furrow. May be involved in microtubule organization and stabilization. The chain is Fibronectin type III and SPRY domain-containing protein 1 (FSD1) from Bos taurus (Bovine).